The chain runs to 281 residues: tRNA pseudouridine synthase A (281 aa).

The active-site Nucleophile is the aspartate 55. Tyrosine 110 is a substrate binding site.

The protein belongs to the tRNA pseudouridine synthase TruA family.

It catalyses the reaction uridine(38/39/40) in tRNA = pseudouridine(38/39/40) in tRNA. Functionally, formation of pseudouridine at positions 38, 39 and 40 in the anticodon stem and loop of transfer RNAs. The polypeptide is tRNA pseudouridine synthase A (Methanocorpusculum labreanum (strain ATCC 43576 / DSM 4855 / Z)).